A 323-amino-acid polypeptide reads, in one-letter code: Mitochondrial glutamate carrier 1 (323 aa).

Solcar repeat units follow at residues 6 to 93 (ISLP…FRHQ), 101 to 214 (LTLP…LNQL), and 223 to 312 (SPFY…GIAE). A run of 6 helical transmembrane segments spans residues 12–32 (LINGGIAGLIGVTCVFPIDLA), 62–82 (YFGMYRGAAVNLTLVTPEKAI), 107–127 (MLAGCGAGTCQVIVTTPMEML), 189–209 (GLGATLLRDVPFSIVYFPLFA), 223–243 (SPFYVSFLAGCVAGSAAAVAV), and 292–312 (ALVIAPLFGIAQVVYFLGIAE).

Belongs to the mitochondrial carrier (TC 2.A.29) family.

The protein resides in the mitochondrion inner membrane. It catalyses the reaction L-glutamate(in) + H(+)(in) = L-glutamate(out) + H(+)(out). In terms of biological role, mitochondrial glutamate/H(+) symporter. Responsible for the transport of glutamate from the cytosol into the mitochondrial matrix with the concomitant import of a proton. Plays a role in the control of glucose-stimulated insulin secretion. The polypeptide is Mitochondrial glutamate carrier 1 (Slc25a22) (Mus musculus (Mouse)).